We begin with the raw amino-acid sequence, 364 residues long: UDP-N-acetylglucosamine--N-acetylmuramyl-(pentapeptide) pyrophosphoryl-undecaprenol N-acetylglucosamine transferase (364 aa).

Residues 10-12 (TGG), N124, S195, I250, and Q295 contribute to the UDP-N-acetyl-alpha-D-glucosamine site.

The protein belongs to the glycosyltransferase 28 family. MurG subfamily.

It localises to the cell membrane. The enzyme catalyses Mur2Ac(oyl-L-Ala-gamma-D-Glu-L-Lys-D-Ala-D-Ala)-di-trans,octa-cis-undecaprenyl diphosphate + UDP-N-acetyl-alpha-D-glucosamine = beta-D-GlcNAc-(1-&gt;4)-Mur2Ac(oyl-L-Ala-gamma-D-Glu-L-Lys-D-Ala-D-Ala)-di-trans,octa-cis-undecaprenyl diphosphate + UDP + H(+). It functions in the pathway cell wall biogenesis; peptidoglycan biosynthesis. Its function is as follows. Cell wall formation. Catalyzes the transfer of a GlcNAc subunit on undecaprenyl-pyrophosphoryl-MurNAc-pentapeptide (lipid intermediate I) to form undecaprenyl-pyrophosphoryl-MurNAc-(pentapeptide)GlcNAc (lipid intermediate II). The polypeptide is UDP-N-acetylglucosamine--N-acetylmuramyl-(pentapeptide) pyrophosphoryl-undecaprenol N-acetylglucosamine transferase (Levilactobacillus brevis (strain ATCC 367 / BCRC 12310 / CIP 105137 / JCM 1170 / LMG 11437 / NCIMB 947 / NCTC 947) (Lactobacillus brevis)).